The primary structure comprises 234 residues: 1-(5-phosphoribosyl)-5-[(5-phosphoribosylamino)methylideneamino] imidazole-4-carboxamide isomerase (234 aa).

Aspartate 9 serves as the catalytic Proton acceptor. Aspartate 131 acts as the Proton donor in catalysis.

Belongs to the HisA/HisF family.

The protein localises to the cytoplasm. It carries out the reaction 1-(5-phospho-beta-D-ribosyl)-5-[(5-phospho-beta-D-ribosylamino)methylideneamino]imidazole-4-carboxamide = 5-[(5-phospho-1-deoxy-D-ribulos-1-ylimino)methylamino]-1-(5-phospho-beta-D-ribosyl)imidazole-4-carboxamide. It participates in amino-acid biosynthesis; L-histidine biosynthesis; L-histidine from 5-phospho-alpha-D-ribose 1-diphosphate: step 4/9. The sequence is that of 1-(5-phosphoribosyl)-5-[(5-phosphoribosylamino)methylideneamino] imidazole-4-carboxamide isomerase from Staphylococcus epidermidis (strain ATCC 35984 / DSM 28319 / BCRC 17069 / CCUG 31568 / BM 3577 / RP62A).